Here is a 1079-residue protein sequence, read N- to C-terminus: Integrator complex subunit 3 homolog (1079 aa).

Disordered stretches follow at residues 539 to 574 (ESSE…DDLP), 925 to 949 (YPSS…TPSA), and 1010 to 1079 (AVGR…NDSD). The span at 938–949 (KGSSAASSTPSA) shows a compositional bias: low complexity. Residues serine 1049, serine 1050, serine 1054, and serine 1055 each carry the phosphoserine modification. The span at 1062–1073 (HKITQAAKKRKK) shows a compositional bias: basic residues.

It belongs to the Integrator subunit 3 family. As to quaternary structure, belongs to the multiprotein complex Integrator, at least composed of IntS1, IntS2, IntS3, IntS4, omd/IntS5, IntS6, defl/IntS7, IntS8, IntS9, IntS10, IntS11, IntS12, asun/IntS13, IntS14 and IntS15. The core complex associates with protein phosphatase 2A subunits mts/PP2A and Pp2A-29B, to form the Integrator-PP2A (INTAC) complex.

It localises to the nucleus. The protein resides in the cytoplasm. Its function is as follows. Component of the integrator complex, a multiprotein complex that terminates RNA polymerase II (Pol II) transcription in the promoter-proximal region of genes. The integrator complex provides a quality checkpoint during transcription elongation by driving premature transcription termination of transcripts that are unfavorably configured for transcriptional elongation: the complex terminates transcription by (1) catalyzing dephosphorylation of the C-terminal domain (CTD) of Pol II subunit Polr2A/Rbp1 and Spt5, and (2) degrading the exiting nascent RNA transcript via endonuclease activity. The integrator complex is also involved in the 3'-end processing of the U7 snRNA, and also the spliceosomal snRNAs U1, U2, U4 and U5. This chain is Integrator complex subunit 3 homolog (IntS3), found in Drosophila virilis (Fruit fly).